A 92-amino-acid polypeptide reads, in one-letter code: C-C motif chemokine 4 (92 aa).

The N-terminal stretch at 1–23 (MKLCVSAFSLLLLVAAFCDSVLS) is a signal peptide. 2 disulfide bridges follow: C34–C58 and C35–C74.

This sequence belongs to the intercrine beta (chemokine CC) family. As to quaternary structure, homodimer.

The protein localises to the secreted. Functionally, monokine with inflammatory and chemokinetic properties. The sequence is that of C-C motif chemokine 4 (Ccl4) from Rattus norvegicus (Rat).